The sequence spans 239 residues: Probable transcriptional regulatory protein Sca_0317 (239 aa).

This sequence belongs to the TACO1 family. YeeN subfamily.

The protein resides in the cytoplasm. This chain is Probable transcriptional regulatory protein Sca_0317, found in Staphylococcus carnosus (strain TM300).